A 370-amino-acid polypeptide reads, in one-letter code: Homospermidine synthase 1 (370 aa).

This sequence belongs to the deoxyhypusine synthase family. In terms of assembly, homotetramer. NAD(+) serves as cofactor. The N-terminus is blocked. In terms of tissue distribution, expressed in roots.

The catalysed reaction is putrescine + spermidine = sym-homospermidine + propane-1,3-diamine. The protein operates within alkaloid biosynthesis; pyrrolizidine alkaloid biosynthesis. Its function is as follows. Catalyzes the transfer of an aminobutyl unit from spermidine onto putrescine. The resulting polyamine homospermidine is a precursor in the biosynthesis of pyrrolizidine alkaloids. In Senecio vernalis (Spring groundsel), this protein is Homospermidine synthase 1 (HSS1).